Consider the following 92-residue polypeptide: Small ribosomal subunit protein bS20 (92 aa).

Residues 1-28 (MANTASAEKRNRQAQKRRARNVQVRTGV) are disordered.

Belongs to the bacterial ribosomal protein bS20 family.

Functionally, binds directly to 16S ribosomal RNA. This chain is Small ribosomal subunit protein bS20, found in Anaeromyxobacter dehalogenans (strain 2CP-C).